Consider the following 140-residue polypeptide: Nucleoside diphosphate kinase (140 aa).

Positions 11, 59, 87, 93, 104, and 114 each coordinate ATP. The active-site Pros-phosphohistidine intermediate is His-117.

It belongs to the NDK family. Homotetramer. The cofactor is Mg(2+).

Its subcellular location is the cytoplasm. The enzyme catalyses a 2'-deoxyribonucleoside 5'-diphosphate + ATP = a 2'-deoxyribonucleoside 5'-triphosphate + ADP. The catalysed reaction is a ribonucleoside 5'-diphosphate + ATP = a ribonucleoside 5'-triphosphate + ADP. Its function is as follows. Major role in the synthesis of nucleoside triphosphates other than ATP. The ATP gamma phosphate is transferred to the NDP beta phosphate via a ping-pong mechanism, using a phosphorylated active-site intermediate. The chain is Nucleoside diphosphate kinase from Rhodopseudomonas palustris (strain ATCC BAA-98 / CGA009).